We begin with the raw amino-acid sequence, 353 residues long: Photosystem II D2 protein (353 aa).

Threonine 2 carries the post-translational modification N-acetylthreonine. Residue threonine 2 is modified to Phosphothreonine. The helical transmembrane segment at 41–61 (CAYFALGGWFTGTTFVTSWYT) threads the bilayer. Histidine 118 is a chlorophyll a binding site. Residues 125–141 (GFMLRQFEIARSVQLRP) traverse the membrane as a helical segment. Pheophytin a contacts are provided by glutamine 130 and asparagine 143. A helical transmembrane segment spans residues 153–166 (VFVSVFLIYPLGQS). Histidine 198 contacts chlorophyll a. The chain crosses the membrane as a helical span at residues 208 to 228 (AALLCAIHGATVENTLFEDGD). Residues histidine 215 and phenylalanine 262 each coordinate a plastoquinone. Histidine 215 contributes to the Fe cation binding site. Fe cation is bound at residue histidine 269. A helical transmembrane segment spans residues 279-295 (GLWMSALGVVGLALNLR).

It belongs to the reaction center PufL/M/PsbA/D family. As to quaternary structure, PSII is composed of 1 copy each of membrane proteins PsbA, PsbB, PsbC, PsbD, PsbE, PsbF, PsbH, PsbI, PsbJ, PsbK, PsbL, PsbM, PsbT, PsbX, PsbY, PsbZ, Psb30/Ycf12, at least 3 peripheral proteins of the oxygen-evolving complex and a large number of cofactors. It forms dimeric complexes. The cofactor is The D1/D2 heterodimer binds P680, chlorophylls that are the primary electron donor of PSII, and subsequent electron acceptors. It shares a non-heme iron and each subunit binds pheophytin, quinone, additional chlorophylls, carotenoids and lipids. There is also a Cl(-1) ion associated with D1 and D2, which is required for oxygen evolution. The PSII complex binds additional chlorophylls, carotenoids and specific lipids..

It is found in the plastid. The protein resides in the chloroplast thylakoid membrane. The catalysed reaction is 2 a plastoquinone + 4 hnu + 2 H2O = 2 a plastoquinol + O2. Photosystem II (PSII) is a light-driven water:plastoquinone oxidoreductase that uses light energy to abstract electrons from H(2)O, generating O(2) and a proton gradient subsequently used for ATP formation. It consists of a core antenna complex that captures photons, and an electron transfer chain that converts photonic excitation into a charge separation. The D1/D2 (PsbA/PsbD) reaction center heterodimer binds P680, the primary electron donor of PSII as well as several subsequent electron acceptors. D2 is needed for assembly of a stable PSII complex. The protein is Photosystem II D2 protein of Oenothera argillicola (Appalachian evening primrose).